The primary structure comprises 308 residues: Pantothenate kinase (308 aa).

ATP is bound at residue 93 to 100 (GSVAVGKS).

It belongs to the prokaryotic pantothenate kinase family.

It localises to the cytoplasm. It carries out the reaction (R)-pantothenate + ATP = (R)-4'-phosphopantothenate + ADP + H(+). It participates in cofactor biosynthesis; coenzyme A biosynthesis; CoA from (R)-pantothenate: step 1/5. The chain is Pantothenate kinase from Corynebacterium aurimucosum (strain ATCC 700975 / DSM 44827 / CIP 107346 / CN-1) (Corynebacterium nigricans).